Here is a 197-residue protein sequence, read N- to C-terminus: Imidazoleglycerol-phosphate dehydratase (197 aa).

It belongs to the imidazoleglycerol-phosphate dehydratase family.

Its subcellular location is the cytoplasm. The catalysed reaction is D-erythro-1-(imidazol-4-yl)glycerol 3-phosphate = 3-(imidazol-4-yl)-2-oxopropyl phosphate + H2O. The protein operates within amino-acid biosynthesis; L-histidine biosynthesis; L-histidine from 5-phospho-alpha-D-ribose 1-diphosphate: step 6/9. In Pseudomonas fluorescens (strain SBW25), this protein is Imidazoleglycerol-phosphate dehydratase.